Reading from the N-terminus, the 392-residue chain is NADH-quinone oxidoreductase subunit D 1 (392 aa).

It belongs to the complex I 49 kDa subunit family. In terms of assembly, NDH-1 is composed of 14 different subunits. Subunits NuoB, C, D, E, F, and G constitute the peripheral sector of the complex.

The protein resides in the cell inner membrane. It carries out the reaction a quinone + NADH + 5 H(+)(in) = a quinol + NAD(+) + 4 H(+)(out). Functionally, NDH-1 shuttles electrons from NADH, via FMN and iron-sulfur (Fe-S) centers, to quinones in the respiratory chain. The immediate electron acceptor for the enzyme in this species is believed to be a menaquinone. Couples the redox reaction to proton translocation (for every two electrons transferred, four hydrogen ions are translocated across the cytoplasmic membrane), and thus conserves the redox energy in a proton gradient. This is NADH-quinone oxidoreductase subunit D 1 from Cytophaga hutchinsonii (strain ATCC 33406 / DSM 1761 / CIP 103989 / NBRC 15051 / NCIMB 9469 / D465).